A 479-amino-acid polypeptide reads, in one-letter code: tRNA modification GTPase MnmE (479 aa).

3 residues coordinate (6S)-5-formyl-5,6,7,8-tetrahydrofolate: Arg-30, Glu-91, and Lys-130. In terms of domain architecture, TrmE-type G spans 226 to 402 (GFRIVLTGLP…VLKDLVKEFA (177 aa)). Residue Asn-236 coordinates K(+). GTP-binding positions include 236–241 (NVGKSS), 255–261 (TDIPGTT), and 280–283 (DTAG). Ser-240 contributes to the Mg(2+) binding site. Residues Thr-255, Ile-257, and Thr-260 each coordinate K(+). Position 261 (Thr-261) interacts with Mg(2+). Lys-479 is a (6S)-5-formyl-5,6,7,8-tetrahydrofolate binding site.

The protein belongs to the TRAFAC class TrmE-Era-EngA-EngB-Septin-like GTPase superfamily. TrmE GTPase family. Homodimer. Heterotetramer of two MnmE and two MnmG subunits. Requires K(+) as cofactor.

It is found in the cytoplasm. Exhibits a very high intrinsic GTPase hydrolysis rate. Involved in the addition of a carboxymethylaminomethyl (cmnm) group at the wobble position (U34) of certain tRNAs, forming tRNA-cmnm(5)s(2)U34. This Bdellovibrio bacteriovorus (strain ATCC 15356 / DSM 50701 / NCIMB 9529 / HD100) protein is tRNA modification GTPase MnmE.